Reading from the N-terminus, the 228-residue chain is N-acetyltransferase family 8 member 3 (228 aa).

2 helical membrane-spanning segments follow: residues 36 to 56 and 58 to 78; these read MLLL…LFLA and GSWL…WLLA. One can recognise an N-acetyltransferase domain in the interval 61-217; that stretch reads LLVLLSTLTL…RNSPMICLKY (157 aa).

The protein belongs to the camello family.

It is found in the nucleus membrane. The protein resides in the cytoplasm. It localises to the perinuclear region. The catalysed reaction is L-lysyl-[protein] + acetyl-CoA = N(6)-acetyl-L-lysyl-[protein] + CoA + H(+). Its function is as follows. Has histone acetyltransferase activity in vitro, with specificity for histone H4. This Rattus norvegicus (Rat) protein is N-acetyltransferase family 8 member 3.